Reading from the N-terminus, the 302-residue chain is Deoxyhypusine hydroxylase (302 aa).

Methionine 1 is modified (N-acetylmethionine). HEAT-like PBS-type repeat units follow at residues 54-80 (LKHE…VLQD), 87-113 (VRHE…YSTD), 175-201 (ERYR…GLQC), 206-232 (FRHE…TLAR), and 239-265 (VRHE…HIED). Histidine 56, histidine 89, and glutamate 90 together coordinate Fe cation. Fe cation contacts are provided by histidine 208, histidine 241, and glutamate 242.

It belongs to the deoxyhypusine hydroxylase family. Requires Fe(2+) as cofactor.

It carries out the reaction [eIF5A protein]-deoxyhypusine + AH2 + O2 = [eIF5A protein]-hypusine + A + H2O. It participates in protein modification; eIF5A hypusination. In terms of biological role, catalyzes the hydroxylation of the N(6)-(4-aminobutyl)-L-lysine intermediate produced by deoxyhypusine synthase/DHPS on a critical lysine of the eukaryotic translation initiation factor 5A/eIF-5A. This is the second step of the post-translational modification of that lysine into an unusual amino acid residue named hypusine. Hypusination is unique to mature eIF-5A factor and is essential for its function. The polypeptide is Deoxyhypusine hydroxylase (Mus musculus (Mouse)).